The sequence spans 142 residues: Large ribosomal subunit protein uL13 (142 aa).

This sequence belongs to the universal ribosomal protein uL13 family. In terms of assembly, part of the 50S ribosomal subunit.

Its function is as follows. This protein is one of the early assembly proteins of the 50S ribosomal subunit, although it is not seen to bind rRNA by itself. It is important during the early stages of 50S assembly. In Caldicellulosiruptor bescii (strain ATCC BAA-1888 / DSM 6725 / KCTC 15123 / Z-1320) (Anaerocellum thermophilum), this protein is Large ribosomal subunit protein uL13.